We begin with the raw amino-acid sequence, 170 residues long: Glycine cleavage system H protein, mitochondrial (170 aa).

The transit peptide at 1–45 directs the protein to the mitochondrion; it reads MSLRVVRSVRAVACSLRIALASCPPRPWAPSAAAVRSLRTGSALL. The region spanning 63-145 is the Lipoyl-binding domain; it reads IGTVGISNFA…YEDGWLIKMT (83 aa). Lys104 bears the N6-lipoyllysine mark.

The protein belongs to the GcvH family. In terms of assembly, the glycine cleavage system is composed of four proteins: P (GLDC), T (GCST), L (DLD) and H (GCSH). Interacts with GLDC. It depends on (R)-lipoate as a cofactor.

The protein localises to the mitochondrion. Functionally, the glycine cleavage system catalyzes the degradation of glycine. The H protein (GCSH) shuttles the methylamine group of glycine from the P protein (GLDC) to the T protein (GCST). Has a pivotal role in the lipoylation of enzymes involved in cellular energetics such as the mitochondrial dihydrolipoyllysine-residue acetyltransferase component of pyruvate dehydrogenase complex (DLAT), and the mitochondrial dihydrolipoyllysine-residue succinyltransferase component of 2-oxoglutarate dehydrogenase complex (DLST). This is Glycine cleavage system H protein, mitochondrial from Rattus norvegicus (Rat).